Reading from the N-terminus, the 381-residue chain is Mannitol-1-phosphate 5-dehydrogenase (381 aa).

Residue 3–14 (AVHFGAGNIGRG) participates in NAD(+) binding.

It belongs to the mannitol dehydrogenase family.

It carries out the reaction D-mannitol 1-phosphate + NAD(+) = beta-D-fructose 6-phosphate + NADH + H(+). This chain is Mannitol-1-phosphate 5-dehydrogenase, found in Photobacterium profundum (strain SS9).